A 311-amino-acid chain; its full sequence is Methionyl-tRNA formyltransferase (311 aa).

Residue 110 to 113 participates in (6S)-5,6,7,8-tetrahydrofolate binding; it reads SLLP.

It belongs to the Fmt family.

It catalyses the reaction L-methionyl-tRNA(fMet) + (6R)-10-formyltetrahydrofolate = N-formyl-L-methionyl-tRNA(fMet) + (6S)-5,6,7,8-tetrahydrofolate + H(+). Functionally, attaches a formyl group to the free amino group of methionyl-tRNA(fMet). The formyl group appears to play a dual role in the initiator identity of N-formylmethionyl-tRNA by promoting its recognition by IF2 and preventing the misappropriation of this tRNA by the elongation apparatus. The chain is Methionyl-tRNA formyltransferase from Streptococcus mutans serotype c (strain ATCC 700610 / UA159).